Here is a 590-residue protein sequence, read N- to C-terminus: MFGDRRKTGGLNLNGRASIAITPTKRFTDYTGSTSVRKTDARPSLSQPRVSLFNTKNSSVAPRDVKSLVSLNGSKIYNFLVEYESSDAPSEQLIMKPRGKNDFIACFELIYQHLSKDYEFPRHERIEEEVSQIFKGLGYPYPLKNSYYQPMGSSHGYPHLLDALSWLIDIIRINSAVSEDTQNILFGDFMEQGKAQEKTLNYAWMTSTFRDYTNDRKAAENPSSSYWDDTKHRLRKYFEQSNEFEDMTKTAASALEMLNYECDEIEADKGNEASLKEEISRIRDDIRKAKDYLEQNLHVKQHMEKELAMVKSEQEEKISENEKVQKMVDDLKNKIELQKQIHGLTGKEVRQMNLDNNKDKEVVLEIQSELDRLSKETWKLKDEDFFKEQKSKFIHLAEQIMKILSGLNIQMNLEPLRAPTNERDLKDYWETLNKIWVPEISRQLHQRKLELETEQSRFSNKAVTAEERIQIQSETLCEAKKNEAREERIRRNERDSWKDARKHIEQRYEQLLNEKEVLLKQMKLDGSLEKEIEDETARMSATGEEHIQKRSQLEAGIRQILDLMVVEIAEIENKKIGFHVQCAGIEKAVL.

2 coiled-coil regions span residues 269–342 (KGNE…KQIH) and 450–525 (ELET…MKLD).

The protein belongs to the NDC80/HEC1 family. In terms of assembly, component of the NDC80 complex, which is composed of at least ndc-80 and him-10. The NDC80 complex interacts with knl-1. Interacts with the RZZ complex components rod-1 (via N-terminus) and zwl-1.

It localises to the nucleus. It is found in the chromosome. Its subcellular location is the centromere. The protein resides in the kinetochore. The protein localises to the cytoplasm. It localises to the cytoskeleton. Acts as a component of the essential kinetochore-associated ndc-80 complex, which is required for chromosome segregation in mitosis and meiosis and spindle checkpoint activity. Plays a role in kinetochore assembly and recruits the checkpoint protein mdf-2 and the spindly-like protein spdl-1 to unattached kinetochores. Mediates the formation of end-on kinetochore-microtubule attachments through recruitment of spdl-1. The ndc-80 complex synergistically enhances the affinity of the ska-1 complex for microtubules and may allow the ndc-80 complex to track depolymerizing microtubules. This Caenorhabditis elegans protein is Kinetochore protein ndc-80 (ndc-80).